A 139-amino-acid chain; its full sequence is uncharacterized protein (139 aa).

The region spanning 9–133 is the VOC domain; sequence QAAQIRIARP…DGWRIVFMNS (125 aa).

This is an uncharacterized protein from Bacillus subtilis (strain 168).